Reading from the N-terminus, the 130-residue chain is Mitochondrial import protein 1 (130 aa).

Residues 1-41 form a disordered region; it reads MSAEEISNPLAESGVTISSDSEQYSAPESASPQSPSSSSPA. Residues 15–24 show a composition bias toward polar residues; sequence VTISSDSEQY. Low complexity predominate over residues 25–41; it reads SAPESASPQSPSSSSPA.

It belongs to the MIM1 family.

The protein localises to the mitochondrion outer membrane. Required for the assembly of the TOM (translocase of outer membrane) receptor complex, which is responsible for the recognition and translocation of cytosolically synthesized mitochondrial preproteins. This chain is Mitochondrial import protein 1, found in Neurospora crassa (strain ATCC 24698 / 74-OR23-1A / CBS 708.71 / DSM 1257 / FGSC 987).